We begin with the raw amino-acid sequence, 267 residues long: Proenkephalin-A (267 aa).

An N-terminal signal peptide occupies residues 1-24; the sequence is MARFLTLCTWLLLLGPGLLATVRA. Cystine bridges form between Cys26-Cys48, Cys30-Cys52, and Cys33-Cys65. Residues 163–175 show a composition bias toward basic and acidic residues; it reads TGDNRERSHHQDG. A disordered region spans residues 163 to 182; sequence TGDNRERSHHQDGSDNEEEV. 2 consecutive propeptides follow at residues 196–207 and 217–227; these read SPQLEDEAKELQ and VGRPEWWMDYQ. Ser251 is modified (phosphoserine).

It belongs to the opioid neuropeptide precursor family. Proenkephalin-A is cleaved by CTSL to generate Met-enkephalin. Post-translationally, processed and degraded by ACE. In terms of processing, probably cleaved by ACE. Processed by ACE to generate Met-enkephalin in the nucleus accumbens of the brain. Post-translationally, the N-terminal domain contains 6 conserved cysteines thought to be involved in disulfide bonding and/or processing.

The protein resides in the cytoplasmic vesicle. It is found in the secretory vesicle. The protein localises to the chromaffin granule lumen. It localises to the secreted. Its function is as follows. Neuropeptide that competes with and mimic the effects of opiate drugs. They play a role in a number of physiologic functions, including pain perception and responses to stress. Functionally, met-enkephalin-Arg-Phe neuropeptide acts as a strong ligand of Mu-type opioid receptor OPRM1. Met-enkephalin-Arg-Phe-binding to OPRM1 in the nucleus accumbens of the brain increases activation of OPRM1, leading to long-term synaptic depression of glutamate release. In terms of biological role, increases glutamate release in the striatum and decreases GABA concentration in the striatum. Increases glutamate release in the striatum. The protein is Proenkephalin-A of Homo sapiens (Human).